Here is a 153-residue protein sequence, read N- to C-terminus: SsrA-binding protein (153 aa).

Residues 133 to 143 (ADLKERDDKRQ) show a composition bias toward basic and acidic residues. The disordered stretch occupies residues 133 to 153 (ADLKERDDKRQMQQALKQQQY). The span at 144-153 (MQQALKQQQY) shows a compositional bias: low complexity.

It belongs to the SmpB family.

Its subcellular location is the cytoplasm. Required for rescue of stalled ribosomes mediated by trans-translation. Binds to transfer-messenger RNA (tmRNA), required for stable association of tmRNA with ribosomes. tmRNA and SmpB together mimic tRNA shape, replacing the anticodon stem-loop with SmpB. tmRNA is encoded by the ssrA gene; the 2 termini fold to resemble tRNA(Ala) and it encodes a 'tag peptide', a short internal open reading frame. During trans-translation Ala-aminoacylated tmRNA acts like a tRNA, entering the A-site of stalled ribosomes, displacing the stalled mRNA. The ribosome then switches to translate the ORF on the tmRNA; the nascent peptide is terminated with the 'tag peptide' encoded by the tmRNA and targeted for degradation. The ribosome is freed to recommence translation, which seems to be the essential function of trans-translation. The sequence is that of SsrA-binding protein from Protochlamydia amoebophila (strain UWE25).